The sequence spans 503 residues: ATP synthase subunit alpha (503 aa).

Gly170–Thr177 serves as a coordination point for ATP.

Belongs to the ATPase alpha/beta chains family. In terms of assembly, F-type ATPases have 2 components, CF(1) - the catalytic core - and CF(0) - the membrane proton channel. CF(1) has five subunits: alpha(3), beta(3), gamma(1), delta(1), epsilon(1). CF(0) has four main subunits: a, b, b' and c.

The protein localises to the cellular thylakoid membrane. The enzyme catalyses ATP + H2O + 4 H(+)(in) = ADP + phosphate + 5 H(+)(out). Functionally, produces ATP from ADP in the presence of a proton gradient across the membrane. The alpha chain is a regulatory subunit. This is ATP synthase subunit alpha from Rippkaea orientalis (strain PCC 8801 / RF-1) (Cyanothece sp. (strain PCC 8801)).